Consider the following 154-residue polypeptide: MEKKTTKKATASKTTTTKKAAAEKTEIKETKKTTTTKTSTAKKATTASVEKTEVKETKKSSDNKKEFNPQDRPFAKYNRGYPNKQGRRKKFCKLCAKGQEHVDYKDVELLYKYLTPNLKIASRKITFACSKHQTRVSNAIKRARIVALIPFVRD.

Residues 1–82 are disordered; it reads MEKKTTKKAT…PFAKYNRGYP (82 aa). Positions 8-19 are enriched in low complexity; that stretch reads KATASKTTTTKK. Residues 20-32 show a composition bias toward basic and acidic residues; sequence AAAEKTEIKETKK. Over residues 33–49 the composition is skewed to low complexity; the sequence is TTTTKTSTAKKATTASV. Residues 50–69 show a composition bias toward basic and acidic residues; it reads EKTEVKETKKSSDNKKEFNP.

The protein belongs to the bacterial ribosomal protein bS18 family. In terms of assembly, part of the 30S ribosomal subunit. Forms a tight heterodimer with protein bS6.

Its function is as follows. Binds as a heterodimer with protein bS6 to the central domain of the 16S rRNA, where it helps stabilize the platform of the 30S subunit. This chain is Small ribosomal subunit protein bS18, found in Malacoplasma penetrans (strain HF-2) (Mycoplasma penetrans).